The primary structure comprises 68 residues: uncharacterized protein (68 aa).

The region spanning 2–67 (KTITLNIKGI…VIEDAGFDAT (66 aa)) is the HMA domain. 2 residues coordinate a metal cation: Cys-13 and Cys-16.

This is an uncharacterized protein from Haemophilus influenzae (strain ATCC 51907 / DSM 11121 / KW20 / Rd).